The primary structure comprises 205 residues: Holliday junction branch migration complex subunit RuvA (205 aa).

The segment at 1–62 (MFEYVTGYVE…EDIMALYGFK (62 aa)) is domain I. The segment at 63–141 (TREERLLFTK…DVVPDAFVDL (79 aa)) is domain II. Positions 142 to 152 (FSDEERFDEKK) are flexible linker. Residues 153 to 205 (GSSAELDEALEALRALGYAEREVSRVVPELLKESLTTDQYIKKALSLLLNGKR) are domain III.

This sequence belongs to the RuvA family. Homotetramer. Forms an RuvA(8)-RuvB(12)-Holliday junction (HJ) complex. HJ DNA is sandwiched between 2 RuvA tetramers; dsDNA enters through RuvA and exits via RuvB. An RuvB hexamer assembles on each DNA strand where it exits the tetramer. Each RuvB hexamer is contacted by two RuvA subunits (via domain III) on 2 adjacent RuvB subunits; this complex drives branch migration. In the full resolvosome a probable DNA-RuvA(4)-RuvB(12)-RuvC(2) complex forms which resolves the HJ.

It is found in the cytoplasm. In terms of biological role, the RuvA-RuvB-RuvC complex processes Holliday junction (HJ) DNA during genetic recombination and DNA repair, while the RuvA-RuvB complex plays an important role in the rescue of blocked DNA replication forks via replication fork reversal (RFR). RuvA specifically binds to HJ cruciform DNA, conferring on it an open structure. The RuvB hexamer acts as an ATP-dependent pump, pulling dsDNA into and through the RuvAB complex. HJ branch migration allows RuvC to scan DNA until it finds its consensus sequence, where it cleaves and resolves the cruciform DNA. This chain is Holliday junction branch migration complex subunit RuvA, found in Bacillus cereus (strain AH187).